The sequence spans 228 residues: L-ribulose-5-phosphate 4-epimerase UlaF (228 aa).

Residues 26 to 27 (GN), 43 to 44 (SG), and 72 to 73 (SS) each bind substrate. The Zn(2+) site is built by D74, H93, and H95. Residue D118 is the Proton donor/acceptor of the active site. A Zn(2+)-binding site is contributed by H167. The active-site Proton donor/acceptor is Y225.

Belongs to the aldolase class II family. AraD/FucA subfamily. Requires Zn(2+) as cofactor.

It carries out the reaction L-ribulose 5-phosphate = D-xylulose 5-phosphate. It participates in cofactor degradation; L-ascorbate degradation; D-xylulose 5-phosphate from L-ascorbate: step 4/4. Functionally, catalyzes the isomerization of L-ribulose 5-phosphate to D-xylulose 5-phosphate. Is involved in the anaerobic L-ascorbate utilization. In Shigella dysenteriae serotype 1 (strain Sd197), this protein is L-ribulose-5-phosphate 4-epimerase UlaF.